The following is a 134-amino-acid chain: Holo-[acyl-carrier-protein] synthase (134 aa).

The Mg(2+) site is built by aspartate 8 and glutamate 57.

The protein belongs to the P-Pant transferase superfamily. AcpS family. Mg(2+) is required as a cofactor.

It localises to the cytoplasm. It catalyses the reaction apo-[ACP] + CoA = holo-[ACP] + adenosine 3',5'-bisphosphate + H(+). Functionally, transfers the 4'-phosphopantetheine moiety from coenzyme A to a Ser of acyl-carrier-protein. The chain is Holo-[acyl-carrier-protein] synthase from Brucella abortus (strain S19).